The chain runs to 423 residues: Putative competence-damage inducible protein (423 aa).

It belongs to the CinA family.

This Streptococcus pyogenes serotype M3 (strain ATCC BAA-595 / MGAS315) protein is Putative competence-damage inducible protein.